A 339-amino-acid polypeptide reads, in one-letter code: ATPase GET3 (339 aa).

Position 37–44 (37–44 (KGGVGKTT)) interacts with ATP. Aspartate 66 is an active-site residue. Glutamate 237 and asparagine 264 together coordinate ATP. The Zn(2+) site is built by cysteine 275 and cysteine 278.

It belongs to the arsA ATPase family. As to quaternary structure, homodimer.

The protein resides in the cytoplasm. The protein localises to the endoplasmic reticulum. In terms of biological role, ATPase required for the post-translational delivery of tail-anchored (TA) proteins to the endoplasmic reticulum. Recognizes and selectively binds the transmembrane domain of TA proteins in the cytosol. This complex then targets to the endoplasmic reticulum by membrane-bound receptors, where the tail-anchored protein is released for insertion. This process is regulated by ATP binding and hydrolysis. ATP binding drives the homodimer towards the closed dimer state, facilitating recognition of newly synthesized TA membrane proteins. ATP hydrolysis is required for insertion. Subsequently, the homodimer reverts towards the open dimer state, lowering its affinity for the membrane-bound receptor, and returning it to the cytosol to initiate a new round of targeting. In Rhodotorula glutinis (Yeast), this protein is ATPase GET3.